The sequence spans 122 residues: Large ribosomal subunit protein uL14 (122 aa).

Belongs to the universal ribosomal protein uL14 family. As to quaternary structure, part of the 50S ribosomal subunit. Forms a cluster with proteins L3 and L19. In the 70S ribosome, L14 and L19 interact and together make contacts with the 16S rRNA in bridges B5 and B8.

Binds to 23S rRNA. Forms part of two intersubunit bridges in the 70S ribosome. The polypeptide is Large ribosomal subunit protein uL14 (Desulforudis audaxviator (strain MP104C)).